Here is a 1226-residue protein sequence, read N- to C-terminus: DNA-directed RNA polymerase subunit beta (1226 aa).

The protein belongs to the RNA polymerase beta chain family. As to quaternary structure, the RNAP catalytic core consists of 2 alpha, 1 beta, 1 beta' and 1 omega subunit. When a sigma factor is associated with the core the holoenzyme is formed, which can initiate transcription.

The enzyme catalyses RNA(n) + a ribonucleoside 5'-triphosphate = RNA(n+1) + diphosphate. DNA-dependent RNA polymerase catalyzes the transcription of DNA into RNA using the four ribonucleoside triphosphates as substrates. This chain is DNA-directed RNA polymerase subunit beta, found in Leptospira interrogans serogroup Icterohaemorrhagiae serovar copenhageni (strain Fiocruz L1-130).